The following is a 316-amino-acid chain: Probable cell division protein WhiA (316 aa).

Residues Thr-275 to Thr-309 constitute a DNA-binding region (H-T-H motif).

This sequence belongs to the WhiA family.

It localises to the cytoplasm. The protein resides in the nucleoid. In terms of biological role, involved in cell division and chromosome segregation. May influence the activity of FtsZ. Binds DNA, but does not seem to function as a transcription factor. This chain is Probable cell division protein WhiA, found in Bacillus subtilis (strain 168).